Reading from the N-terminus, the 147-residue chain is Nucleoside diphosphate kinase (147 aa).

The ATP site is built by Lys11, Phe59, Arg87, Thr93, Arg104, and Asn114. The active-site Pros-phosphohistidine intermediate is the His117.

It belongs to the NDK family. In terms of assembly, homotetramer. Mg(2+) serves as cofactor.

Its subcellular location is the cytoplasm. The catalysed reaction is a 2'-deoxyribonucleoside 5'-diphosphate + ATP = a 2'-deoxyribonucleoside 5'-triphosphate + ADP. It catalyses the reaction a ribonucleoside 5'-diphosphate + ATP = a ribonucleoside 5'-triphosphate + ADP. In terms of biological role, major role in the synthesis of nucleoside triphosphates other than ATP. The ATP gamma phosphate is transferred to the NDP beta phosphate via a ping-pong mechanism, using a phosphorylated active-site intermediate. The sequence is that of Nucleoside diphosphate kinase from Anaeromyxobacter dehalogenans (strain 2CP-1 / ATCC BAA-258).